Here is a 162-residue protein sequence, read N- to C-terminus: 3-isopropylmalate dehydratase small subunit (162 aa).

Belongs to the LeuD family. LeuD type 2 subfamily. As to quaternary structure, heterodimer of LeuC and LeuD.

It carries out the reaction (2R,3S)-3-isopropylmalate = (2S)-2-isopropylmalate. It participates in amino-acid biosynthesis; L-leucine biosynthesis; L-leucine from 3-methyl-2-oxobutanoate: step 2/4. Catalyzes the isomerization between 2-isopropylmalate and 3-isopropylmalate, via the formation of 2-isopropylmaleate. The chain is 3-isopropylmalate dehydratase small subunit from Pyrobaculum neutrophilum (strain DSM 2338 / JCM 9278 / NBRC 100436 / V24Sta) (Thermoproteus neutrophilus).